The sequence spans 347 residues: uncharacterized protein (347 aa).

Residues 1-44 (MWNPKKKSEALAKFKSFPYPKPGTSNVLDSKEGDTRRKYFTKTH) are Cytoplasmic-facing. Residues 45–62 (LHRLFVFVVLLLCSGYFL) traverse the membrane as a helical; Signal-anchor for type II membrane protein segment. Over 63–347 (KHTLLTRPKE…RGWRKLVPFL (285 aa)) the chain is Lumenal.

It belongs to the glycosyltransferase 34 family.

Its subcellular location is the endoplasmic reticulum membrane. This is an uncharacterized protein from Schizosaccharomyces pombe (strain 972 / ATCC 24843) (Fission yeast).